A 255-amino-acid chain; its full sequence is Putative mediator of RNA polymerase II transcription subunit 30 (255 aa).

The segment covering 58–107 (QSQQLQQPQSIPSSTNNSTNTNTNNSTTTTTTSSTSSTTTPTTTTSTTSP) has biased composition (low complexity). 2 disordered regions span residues 58-133 (QSQQ…TLNL) and 177-207 (NIDN…IEKQ). Polar residues predominate over residues 108-133 (LNSKDSTATTTTKEQPSSPTLPTLNL). A compositionally biased stretch (basic and acidic residues) spans 177–189 (NIDNDDTIMKDDN). Residues 190–201 (NNSSTSAPTTTT) show a composition bias toward low complexity.

This sequence belongs to the Mediator complex subunit 30 family. Highly divergent. In terms of assembly, component of the Mediator complex.

The protein localises to the nucleus. In terms of biological role, component of the Mediator complex, a coactivator involved in the regulated transcription of nearly all RNA polymerase II-dependent genes. Mediator functions as a bridge to convey information from gene-specific regulatory proteins to the basal RNA polymerase II transcription machinery. Mediator is recruited to promoters by direct interactions with regulatory proteins and serves as a scaffold for the assembly of a functional preinitiation complex with RNA polymerase II and the general transcription factors. The polypeptide is Putative mediator of RNA polymerase II transcription subunit 30 (med30) (Dictyostelium discoideum (Social amoeba)).